A 1107-amino-acid chain; its full sequence is OTU domain-containing protein 4 (1107 aa).

Met-1 bears the N-acetylmethionine mark. The OTU domain maps to 34–155 (LYRKLVAKDG…GNHYDIVYPI (122 aa)). A cys-loop region spans residues 39–45 (VAKDGSC). Residue Asp-42 is part of the active site. Residue Cys-45 is the Nucleophile of the active site. The variable-loop stretch occupies residues 94–104 (LENPQEWVGQV). Tyr-120 bears the Phosphotyrosine mark. 2 positions are modified to phosphoserine: Ser-126 and Ser-128. Thr-131 is modified (phosphothreonine). The segment at 143-148 (FSNGNH) is his-loop. The active site involves His-148. A phosphoserine mark is found at Ser-166, Ser-199, Ser-202, and Ser-204. Over residues 195-206 (EESNSEISDSED) the composition is skewed to acidic residues. 2 disordered regions span residues 195-239 (EESN…SADL) and 322-431 (KHTP…DFDH). Residues 226-236 (GSENPKNNGNS) show a composition bias toward polar residues. Position 340 is a phosphoserine (Ser-340). A compositionally biased stretch (low complexity) spans 392–403 (SSHSTGSQSQKS). The segment covering 419 to 431 (RKPDRERAEDFDH) has biased composition (basic and acidic residues). Tyr-438 is subject to Phosphotyrosine. Phosphoserine is present on Ser-442. A Phosphotyrosine modification is found at Tyr-459. A disordered region spans residues 470–568 (PALSSSSVSQ…KPAEHIPLSN (99 aa)). Over residues 473 to 486 (SSSSVSQSPSQNSN) the composition is skewed to low complexity. Basic and acidic residues predominate over residues 495–528 (HARDRKGSMRRADAEERKDKDSLRGHTHVDKKPE). 2 positions are modified to phosphoserine: Ser-544 and Ser-895. Residues 918 to 1107 (LSAASVSSKH…MGDGHRGQHT (190 aa)) are disordered. Residues 963–994 (NREREPGSAEPEPKRTIQSLKEKPEKVKDPKT) are compositionally biased toward basic and acidic residues. Phosphoserine is present on residues Ser-1000, Ser-1005, Ser-1016, and Ser-1017. Residues 1032–1041 (SKQFYNQTYG) are compositionally biased toward polar residues. Ser-1042 carries the phosphoserine modification. 2 stretches are compositionally biased toward basic and acidic residues: residues 1060-1079 (VRGEESWKGQPNRSRDEGYQ) and 1089-1107 (YRGDRRRSGMGDGHRGQHT).

In terms of assembly, interacts with MYD88; the interaction is direct. Interacts with ALKBH3; the interaction is direct. Interacts with USP7; the interaction is direct. Interacts with USP9X; the interaction is direct. Phosphorylation at Ser-202 and Ser-204 activates 'Lys-63'-specific deubiquitinase activity. Induced upon stimulation with IL1B.

The protein localises to the cytoplasm. It localises to the nucleus. The enzyme catalyses Thiol-dependent hydrolysis of ester, thioester, amide, peptide and isopeptide bonds formed by the C-terminal Gly of ubiquitin (a 76-residue protein attached to proteins as an intracellular targeting signal).. With respect to regulation, phosphorylation on Ser-202 and Ser-204 induces 'Lys-63'-specific deubiquitinase activity. Its function is as follows. Deubiquitinase which hydrolyzes the isopeptide bond between the ubiquitin C-terminus and the lysine epsilon-amino group of the target protein. May negatively regulate inflammatory and pathogen recognition signaling in innate immune response. Upon phosphorylation at Ser-202 and Ser-204 residues, via IL-1 receptor and Toll-like receptor signaling pathway, specifically deubiquitinates 'Lys-63'-polyubiquitinated MYD88 adapter protein triggering down-regulation of NF-kappa-B-dependent transcription of inflammatory mediators. Independently of the catalytic activity, acts as a scaffold for alternative deubiquitinases to assemble specific deubiquitinase-substrate complexes. Associates with USP7 and USP9X deubiquitinases to stabilize alkylation repair enzyme ALKBH3, thereby promoting the repair of alkylated DNA lesions. The protein is OTU domain-containing protein 4 of Mus musculus (Mouse).